We begin with the raw amino-acid sequence, 294 residues long: Cyclin-G1 (294 aa).

This sequence belongs to the cyclin family. Cyclin G subfamily.

The protein localises to the nucleus. Functionally, may play a role in growth regulation. Is associated with G2/M phase arrest in response to DNA damage. May be an intermediate by which p53 mediates its role as an inhibitor of cellular proliferation. This Rattus norvegicus (Rat) protein is Cyclin-G1 (Ccng1).